Reading from the N-terminus, the 659-residue chain is Alpha-galactosidase D (659 aa).

Residues 1–20 (MRALVPMVVAATALASPAPA) form the signal peptide. N-linked (GlcNAc...) asparagine glycosylation is found at N48, N86, and N130. The cysteines at positions 125 and 158 are disulfide-linked. D156 (nucleophile) is an active-site residue. An N-linked (GlcNAc...) asparagine glycan is attached at N183. Position 201–205 (201–205 (EWGID)) interacts with substrate. D223 (proton donor) is an active-site residue. 5 N-linked (GlcNAc...) asparagine glycosylation sites follow: N438, N450, N484, N551, and N583.

Belongs to the glycosyl hydrolase 27 family.

The protein localises to the secreted. It catalyses the reaction Hydrolysis of terminal, non-reducing alpha-D-galactose residues in alpha-D-galactosides, including galactose oligosaccharides, galactomannans and galactolipids.. Functionally, hydrolyzes a variety of simple alpha-D-galactoside as well as more complex molecules such as oligosaccharides and polysaccharides. Active on paranitrophenyl-alpha-galactoside but not on raffinose, locust bean gum and gum guar. This Emericella nidulans (strain FGSC A4 / ATCC 38163 / CBS 112.46 / NRRL 194 / M139) (Aspergillus nidulans) protein is Alpha-galactosidase D (aglD).